Consider the following 290-residue polypeptide: S-adenosylmethionine decarboxylase proenzyme (290 aa).

The Schiff-base intermediate with substrate; via pyruvic acid role is filled by S138. S138 is modified (pyruvic acid (Ser); by autocatalysis). H143 (proton acceptor; for processing activity) is an active-site residue. Residue C166 is the Proton donor; for catalytic activity of the active site.

It belongs to the prokaryotic AdoMetDC family. Type 2 subfamily. As to quaternary structure, heterooctamer of four alpha and four beta chains arranged as a tetramer of alpha/beta heterodimers. Requires pyruvate as cofactor. Is synthesized initially as an inactive proenzyme. Formation of the active enzyme involves a self-maturation process in which the active site pyruvoyl group is generated from an internal serine residue via an autocatalytic post-translational modification. Two non-identical subunits are generated from the proenzyme in this reaction, and the pyruvate is formed at the N-terminus of the alpha chain, which is derived from the carboxyl end of the proenzyme. The post-translation cleavage follows an unusual pathway, termed non-hydrolytic serinolysis, in which the side chain hydroxyl group of the serine supplies its oxygen atom to form the C-terminus of the beta chain, while the remainder of the serine residue undergoes an oxidative deamination to produce ammonia and the pyruvoyl group blocking the N-terminus of the alpha chain.

It catalyses the reaction S-adenosyl-L-methionine + H(+) = S-adenosyl 3-(methylsulfanyl)propylamine + CO2. The protein operates within amine and polyamine biosynthesis; S-adenosylmethioninamine biosynthesis; S-adenosylmethioninamine from S-adenosyl-L-methionine: step 1/1. Its function is as follows. Catalyzes the decarboxylation of S-adenosylmethionine to S-adenosylmethioninamine (dcAdoMet), the propylamine donor required for the synthesis of the polyamines spermine and spermidine from the diamine putrescine. The sequence is that of S-adenosylmethionine decarboxylase proenzyme from Heliobacterium modesticaldum (strain ATCC 51547 / Ice1).